A 207-amino-acid chain; its full sequence is Vascular endothelial growth factor B (207 aa).

Positions 1-21 are cleaved as a signal peptide; the sequence is MSPLLRRLLLAVLLQLAPAQA. Intrachain disulfides connect cysteine 47-cysteine 89, cysteine 78-cysteine 122, and cysteine 82-cysteine 124. A compositionally biased stretch (basic and acidic residues) spans 124-139; it reads CRPKKRESAVKPDRAS. The disordered stretch occupies residues 124-207; that stretch reads CRPKKRESAV…AASSVVKGGA (84 aa). The segment covering 174-201 has biased composition (low complexity); sequence PSAHAAPSAASALTPGPATAAADAAASS.

This sequence belongs to the PDGF/VEGF growth factor family. Homodimer; disulfide-linked. Can also form heterodimer with VEGF. VEGF-B186 is O-glycosylated.

It localises to the secreted. In terms of biological role, growth factor for endothelial cells. VEGF-B167 binds heparin and neuropilin-1 whereas the binding to neuropilin-1 of VEGF-B186 is regulated by proteolysis. The polypeptide is Vascular endothelial growth factor B (VEGFB) (Bos taurus (Bovine)).